A 442-amino-acid chain; its full sequence is Tryptophan synthase beta chain 2 (442 aa).

At K122 the chain carries N6-(pyridoxal phosphate)lysine.

Belongs to the TrpB family. Tetramer of two alpha and two beta chains. Requires pyridoxal 5'-phosphate as cofactor.

It carries out the reaction (1S,2R)-1-C-(indol-3-yl)glycerol 3-phosphate + L-serine = D-glyceraldehyde 3-phosphate + L-tryptophan + H2O. It participates in amino-acid biosynthesis; L-tryptophan biosynthesis; L-tryptophan from chorismate: step 5/5. Its function is as follows. The beta subunit is responsible for the synthesis of L-tryptophan from indole and L-serine. This chain is Tryptophan synthase beta chain 2 (trpB2), found in Methanosarcina acetivorans (strain ATCC 35395 / DSM 2834 / JCM 12185 / C2A).